We begin with the raw amino-acid sequence, 629 residues long: Proteoglycan Cow (629 aa).

The N-terminal stretch at 1–27 (MKHSPLIASACLALVLMSSSLIGSTEA) is a signal peptide. Disordered stretches follow at residues 118–186 (KRRV…ESKE) and 198–223 (GDKQQQQQQLSQPAAGPSVIQQDDDE). Residues 128-143 (DSQDAEDINNDDEDNS) are compositionally biased toward acidic residues. Asn142 carries an N-linked (GlcNAc...) asparagine glycan. Low complexity predominate over residues 144–159 (SDGGSSNSSPTGTNNA). A compositionally biased stretch (acidic residues) spans 167–186 (EETDDEDKSLSLGDDDESKE). A Kazal-like domain is found at 222 to 273 (DEELDNCKPCPVAKPTFLCGADNRTYSSLCRLDYHNCIHSTSIRIACKGFCP). 3 disulfide bridges follow: Cys228/Cys258, Cys231/Cys251, and Cys240/Cys272. N-linked (GlcNAc...) asparagine glycosylation occurs at Asn244. Residues 298–356 (SLDQQQQQQQQQQQQQQQQQAYKDSNNNNIMMNSGNIMGGNNNDFNTIMNDKEDNNRHN) form a disordered region. Residues 301 to 340 (QQQQQQQQQQQQQQQQQAYKDSNNNNIMMNSGNIMGGNNN) are compositionally biased toward low complexity. EF-hand domains follow at residues 468–503 (ACKTEAKWMFGHLDLNNDGQLSLQEMYDLEHDQNER) and 508–535 (FIDTCDLDTDSSINTREWCRCFEKTDRP). Ca(2+)-binding residues include Asp481, Asn483, Asp485, Gln487, and Glu492. One can recognise a Thyroglobulin type-1 domain in the interval 533–594 (DRPCAAVRRR…NTRTRGKPNC (62 aa)). Cystine bridges form between Cys536-Cys555, Cys566-Cys573, and Cys575-Cys594. A disordered region spans residues 602-629 (ASLTSDDEDEGADDEDSAEGSADQMLVF). Residues 606–619 (SDDEDEGADDEDSA) show a composition bias toward acidic residues. A compositionally biased stretch (low complexity) spans 620-629 (EGSADQMLVF).

In terms of assembly, interacts (in heparan sulfate-bound form) with wg. Post-translationally, contains heparan sulfate O-linked oligosaccharides. As to expression, in the wing disk, detected throughout the disk where it is localized primarily to the apical surface but is also present at the basal surface (at protein level).

The protein localises to the secreted. Its function is as follows. Binds to the Wnt signaling protein wg, stabilizes it and promotes its extracellular distribution. This is required for establishment of a wg gradient during development to allow for regulation of target genes at different levels. The chain is Proteoglycan Cow from Drosophila melanogaster (Fruit fly).